A 73-amino-acid chain; its full sequence is Translation initiation factor IF-1 3 (73 aa).

Residues 1-72 (MAKEELVEFG…TKGRINYRHK (72 aa)) enclose the S1-like domain.

It belongs to the IF-1 family. Component of the 30S ribosomal translation pre-initiation complex which assembles on the 30S ribosome in the order IF-2 and IF-3, IF-1 and N-formylmethionyl-tRNA(fMet); mRNA recruitment can occur at any time during PIC assembly.

It localises to the cytoplasm. In terms of biological role, one of the essential components for the initiation of protein synthesis. Stabilizes the binding of IF-2 and IF-3 on the 30S subunit to which N-formylmethionyl-tRNA(fMet) subsequently binds. Helps modulate mRNA selection, yielding the 30S pre-initiation complex (PIC). Upon addition of the 50S ribosomal subunit IF-1, IF-2 and IF-3 are released leaving the mature 70S translation initiation complex. In Cupriavidus pinatubonensis (strain JMP 134 / LMG 1197) (Cupriavidus necator (strain JMP 134)), this protein is Translation initiation factor IF-1 3.